The sequence spans 325 residues: Malate dehydrogenase (325 aa).

11–17 (GAAGHVS) lines the NAD(+) pocket. Substrate-binding residues include Arg-92 and Arg-98. NAD(+)-binding positions include Asn-105, Gln-112, and 129–131 (VGN). 2 residues coordinate substrate: Asn-131 and Arg-162. The active-site Proton acceptor is the His-187.

Belongs to the LDH/MDH superfamily. MDH type 2 family.

The catalysed reaction is (S)-malate + NAD(+) = oxaloacetate + NADH + H(+). Its function is as follows. Catalyzes the reversible oxidation of malate to oxaloacetate. This Desulfotalea psychrophila (strain LSv54 / DSM 12343) protein is Malate dehydrogenase.